Reading from the N-terminus, the 294-residue chain is Nucleotide-binding protein Cbei_4857 (294 aa).

8–15 (GLSGAGKT) provides a ligand contact to ATP. 59 to 62 (DIRG) serves as a coordination point for GTP.

The protein belongs to the RapZ-like family.

Functionally, displays ATPase and GTPase activities. The sequence is that of Nucleotide-binding protein Cbei_4857 from Clostridium beijerinckii (strain ATCC 51743 / NCIMB 8052) (Clostridium acetobutylicum).